The chain runs to 198 residues: Snake venom metalloproteinase neuwiedase (198 aa).

One can recognise a Peptidase M12B domain in the interval 8 to 198 (RYIELVIVAD…QTFLTNHNPQ (191 aa)). 2 residues coordinate Ca(2+): E11 and D95. A Zn(2+)-binding site is contributed by H144. Residue E145 is part of the active site. Zn(2+) is bound by residues H148 and H154. Disulfide bonds link C159-C183 and C161-C166.

It belongs to the venom metalloproteinase (M12B) family. P-I subfamily. Zn(2+) serves as cofactor. In terms of tissue distribution, expressed by the venom gland.

It is found in the secreted. Its activity is regulated as follows. Inhibited by EDTA, EGTA and 1,10-phenanthroline, partially inhibited by beta-mercaptoethanol and not inhibited by serine protease inhibitors (leupeptin and aprotinin). Also inhibited by an excess of zinc, mercury and magnesium ions. Extracts of the plant Casearia mariquitensis neutralizes the decrease of platelets and plasma fibrinogen induced by the protease. The same extracts also partially inhibit Bbeta chain cleavage, but not Aalpha chain cleavage. Functionally, this metalloprotease hydrolyzes the Aalpha chain of fibrin and fibrinogen first followed by the Bbeta chain and shows no effect on the gamma chain. It is also able to degrade type I collagen, fibronectin, laminin and induces inflammatory reaction. It is devoid of hemorrhagic and thrombotic activities, except in lung where it induces pulmonary bleeding. It also induces a mild myotoxic reaction. It is not able to inhibit platelet aggregation, but it induces decrease of platelets and plasma fibrinogen. It contributes to local tissue damage by inducing edema, inflammatory infiltrate and mild myotoxicity, and by degrading extracellular matrix components. The chain is Snake venom metalloproteinase neuwiedase from Bothrops pauloensis (Neuwied's lancehead).